Consider the following 110-residue polypeptide: Large ribosomal subunit protein bL20 (110 aa).

It belongs to the bacterial ribosomal protein bL20 family.

Its function is as follows. Binds directly to 23S ribosomal RNA and is necessary for the in vitro assembly process of the 50S ribosomal subunit. It is not involved in the protein synthesizing functions of that subunit. The sequence is that of Large ribosomal subunit protein bL20 from Shigella boydii serotype 4 (strain Sb227).